Consider the following 150-residue polypeptide: UPF0178 protein Bcep1808_1605 (150 aa).

The protein belongs to the UPF0178 family.

This Burkholderia vietnamiensis (strain G4 / LMG 22486) (Burkholderia cepacia (strain R1808)) protein is UPF0178 protein Bcep1808_1605.